Here is a 475-residue protein sequence, read N- to C-terminus: Ribulose bisphosphate carboxylase large chain (475 aa).

Residues 1-2 constitute a propeptide that is removed on maturation; that stretch reads MS. Pro3 carries the N-acetylproline modification. At Lys14 the chain carries N6,N6,N6-trimethyllysine. Asn123 and Thr173 together coordinate substrate. Catalysis depends on Lys175, which acts as the Proton acceptor. Lys177 contacts substrate. Mg(2+) contacts are provided by Lys201, Asp203, and Glu204. Lys201 is subject to N6-carboxylysine. His294 acts as the Proton acceptor in catalysis. Residues Arg295, His327, and Ser379 each contribute to the substrate site.

The protein belongs to the RuBisCO large chain family. Type I subfamily. As to quaternary structure, heterohexadecamer of 8 large chains and 8 small chains; disulfide-linked. The disulfide link is formed within the large subunit homodimers. It depends on Mg(2+) as a cofactor. Post-translationally, the disulfide bond which can form in the large chain dimeric partners within the hexadecamer appears to be associated with oxidative stress and protein turnover.

Its subcellular location is the plastid. It is found in the chloroplast. It carries out the reaction 2 (2R)-3-phosphoglycerate + 2 H(+) = D-ribulose 1,5-bisphosphate + CO2 + H2O. The catalysed reaction is D-ribulose 1,5-bisphosphate + O2 = 2-phosphoglycolate + (2R)-3-phosphoglycerate + 2 H(+). Functionally, ruBisCO catalyzes two reactions: the carboxylation of D-ribulose 1,5-bisphosphate, the primary event in carbon dioxide fixation, as well as the oxidative fragmentation of the pentose substrate in the photorespiration process. Both reactions occur simultaneously and in competition at the same active site. This chain is Ribulose bisphosphate carboxylase large chain, found in Liquidambar styraciflua (Sweetgum tree).